Here is a 379-residue protein sequence, read N- to C-terminus: MQACEGSAAGRRAFDSICPNRMLDLSRRTLGKPGKPERKFVPSWKSFSGCGGGSPVAVYEDPPDAEPAPLPALTTIDLQDLADCTSLLGTEASPSGDSSASQNPSLQTEEDFNLQNFRDAMDDLIADSSSLMSPPLTNSDFPFSPCDVSSFGSCLSPSLDPPALGSPDLPPPPTEQYWKEVADQNQRALGTALIENNQLHVTLTQKQEEIASLRERNVQLKELASRTRHLASVLDKLMITQSPAEPFQIKATTKRSLEELFCAAGQAGQGCAEVDAILRDISQRCEEALHNRDPKRPRLQPEPDSKDCSSRNLHGAFRGLRTDCSASSVNLSHSELEEGGSFSTPIRSHSTIRTLAFPQGKAFTIRTVTGGYKFRWVPS.

The segment at 1-129 (MQACEGSAAG…AMDDLIADSS (129 aa)) is necessary and sufficient for its degradation during the cell cycle. 2 disordered regions span residues 26 to 71 (SRRT…APLP) and 88 to 107 (LGTEASPSGDSSASQNPSLQ). The span at 92–107 (ASPSGDSSASQNPSLQ) shows a compositional bias: polar residues. The tract at residues 130–379 (SLMSPPLTNS…GGYKFRWVPS (250 aa)) is necessary and sufficient for proper nuclear localization. Residues 171-241 (PPPTEQYWKE…SVLDKLMITQ (71 aa)) are necessary and sufficient for interaction with GMNN and sufficient for homodimerization. Residues 175–223 (EQYWKEVADQNQRALGTALIENNQLHVTLTQKQEEIASLRERNVQLKEL) are a coiled coil. A compositionally biased stretch (basic and acidic residues) spans 291–309 (NRDPKRPRLQPEPDSKDCS). The segment at 291-312 (NRDPKRPRLQPEPDSKDCSSRN) is disordered.

The protein belongs to the geminin family. In terms of assembly, heterodimer (via coiled-coil domain) with GMNN (via coiled-coil domain); targets GMNN to the nucleus. Can form homodimers (in vitro, via coiled-coil domain), but these are much less stable than the heterodimer formed with GMNN.

The protein resides in the nucleus. Functionally, transcription regulator specifically required for multiciliate cell differentiation. Acts in a multiprotein complex containing E2F4 and E2F5 that binds and activates genes required for centriole biogenesis. Required for the deuterosome-mediated acentriolar pathway. Plays a role in mitotic cell cycle progression by promoting cell cycle exit. Modulates GMNN activity by reducing its affinity for CDT1. The polypeptide is Multicilin (Mcidas) (Mus musculus (Mouse)).